The chain runs to 417 residues: Serpin H1 (417 aa).

The signal sequence occupies residues 1-17 (MRSLLLGTLCLLAVALA). Residue K93 is modified to N6-succinyllysine. N119 and N124 each carry an N-linked (GlcNAc...) asparagine glycan. S140 is subject to Phosphoserine. At K206 the chain carries N6-acetyllysine. K295 carries the post-translational modification N6-succinyllysine. An N6-acetyllysine modification is found at K318. A glycan (N-linked (GlcNAc...) asparagine) is linked at N394. The Prevents secretion from ER signature appears at 414 to 417 (RDEL).

The protein belongs to the serpin family.

It localises to the endoplasmic reticulum lumen. Functionally, binds specifically to collagen. Could be involved as a chaperone in the biosynthetic pathway of collagen. The polypeptide is Serpin H1 (Serpinh1) (Rattus norvegicus (Rat)).